Reading from the N-terminus, the 84-residue chain is Delta-thalatoxin-Hhe1a (84 aa).

The first 19 residues, 1–19, serve as a signal peptide directing secretion; the sequence is MAYQKIVFVALMLVLAVSA. A propeptide spanning residues 20 to 33 is cleaved from the precursor; the sequence is MRLPDQQDQDISVA. Intrachain disulfides connect C38-C78, C40-C68, and C61-C79.

This sequence belongs to the sea anemone sodium channel inhibitory toxin family. Type II subfamily.

Its subcellular location is the secreted. The protein resides in the nematocyst. Its function is as follows. Binds specifically to the voltage-gated sodium channel (Nav) and delays its inactivation. In Heterodactyla hemprichii (Hemprich's sea anemone), this protein is Delta-thalatoxin-Hhe1a.